Here is a 74-residue protein sequence, read N- to C-terminus: MFTLKKSLLLVFFLGTISLSLCEDERNADEDDGEMTEEVRRGLMDSLKGLAATAGKTVLQGLLKTASCKLEKTC.

The first 22 residues, 1-22 (MFTLKKSLLLVFFLGTISLSLC), serve as a signal peptide directing secretion. The propeptide occupies 23–39 (EDERNADEDDGEMTEEV). A disulfide bridge links cysteine 68 with cysteine 74.

As to expression, expressed by the skin glands.

It is found in the secreted. Its function is as follows. Antimicrobial peptide. The sequence is that of Pelophylaxin-3 from Pelophylax fukienensis (Fukien gold-striped pond frog).